The primary structure comprises 55 residues: Large ribosomal subunit protein bL33 (55 aa).

This sequence belongs to the bacterial ribosomal protein bL33 family.

This Zymomonas mobilis subsp. mobilis (strain ATCC 31821 / ZM4 / CP4) protein is Large ribosomal subunit protein bL33.